A 514-amino-acid polypeptide reads, in one-letter code: Membrane-bound lytic murein transglycosylase F (514 aa).

The signal sequence occupies residues 1 to 30 (MKKLKINYLFIGILTLLLAAALWPSIPWFG). The segment at 31–269 (KTENHIAAIQ…RIEEKYLGHG (239 aa)) is non-LT domain. The interval 270–514 (DDFDYVDTRS…LFTPQKKEEK (245 aa)) is LT domain. E314 is a catalytic residue.

This sequence in the N-terminal section; belongs to the bacterial solute-binding protein 3 family. It in the C-terminal section; belongs to the transglycosylase Slt family.

The protein localises to the cell outer membrane. It carries out the reaction Exolytic cleavage of the (1-&gt;4)-beta-glycosidic linkage between N-acetylmuramic acid (MurNAc) and N-acetylglucosamine (GlcNAc) residues in peptidoglycan, from either the reducing or the non-reducing ends of the peptidoglycan chains, with concomitant formation of a 1,6-anhydrobond in the MurNAc residue.. In terms of biological role, murein-degrading enzyme that degrades murein glycan strands and insoluble, high-molecular weight murein sacculi, with the concomitant formation of a 1,6-anhydromuramoyl product. Lytic transglycosylases (LTs) play an integral role in the metabolism of the peptidoglycan (PG) sacculus. Their lytic action creates space within the PG sacculus to allow for its expansion as well as for the insertion of various structures such as secretion systems and flagella. The protein is Membrane-bound lytic murein transglycosylase F of Salmonella paratyphi B (strain ATCC BAA-1250 / SPB7).